Here is a 239-residue protein sequence, read N- to C-terminus: Putative ABC transporter ATP-binding protein BR1368/BS1330_I1363 (239 aa).

The 230-residue stretch at 5–234 folds into the ABC transporter domain; it reads LSLDRVSVSR…EQVHLHYVEA (230 aa). 37-44 is an ATP binding site; sequence GDNGVGKT.

This sequence belongs to the ABC transporter superfamily.

It is found in the cell inner membrane. Probably part of an ABC transporter complex. Responsible for energy coupling to the transport system. In Brucella suis biovar 1 (strain 1330), this protein is Putative ABC transporter ATP-binding protein BR1368/BS1330_I1363.